A 714-amino-acid polypeptide reads, in one-letter code: Hormonally up-regulated neu tumor-associated kinase (714 aa).

The span at 1–16 (MPAAAGDGLLGEPAAP) shows a compositional bias: low complexity. Residues 1–28 (MPAAAGDGLLGEPAAPGGDGGAEDTTRP) form a disordered region. In terms of domain architecture, Protein kinase spans 62–320 (LIGSRKLGEG…IQQALANRWL (259 aa)). Residues 68-76 (LGEGSFAKV) and lysine 91 each bind ATP. Aspartate 186 serves as the catalytic Proton acceptor. Over residues 624–635 (HEEKNSPPKEEG) the composition is skewed to basic and acidic residues. 2 disordered regions span residues 624 to 658 (HEEKNSPPKEEGVCSPPPVPSNGLLQPLGSPNCVK) and 674 to 714 (KRHQ…KGQC). Over residues 692-703 (SPLQPTAPSSLS) the composition is skewed to polar residues.

This sequence belongs to the protein kinase superfamily. CAMK Ser/Thr protein kinase family. SNF1 subfamily.

It catalyses the reaction L-seryl-[protein] + ATP = O-phospho-L-seryl-[protein] + ADP + H(+). The enzyme catalyses L-threonyl-[protein] + ATP = O-phospho-L-threonyl-[protein] + ADP + H(+). In Mus musculus (Mouse), this protein is Hormonally up-regulated neu tumor-associated kinase (Hunk).